Here is a 232-residue protein sequence, read N- to C-terminus: MIIIVKIKRGLIVSCQALENEPLHSSFIMSKMALAAKIGGAIGIRANGVNDISQIKLEVDLPIIGIIKKNYNNCDVFITPTMKEIDELCNEGVDIIALDATFRNRPDGVLLDDFFENIKKKYPKQCLMADISSLDEAINADKLGFDFIGTTLYGYTKNTNGLNIADNDFNFLRTLLNSNLKSTLIVEGKIDTPLKAQKCFEMGVDLVVVGGAITRPAEITKKFVEKINQIKK.

It belongs to the NanE family.

It carries out the reaction an N-acyl-D-glucosamine 6-phosphate = an N-acyl-D-mannosamine 6-phosphate. It functions in the pathway amino-sugar metabolism; N-acetylneuraminate degradation; D-fructose 6-phosphate from N-acetylneuraminate: step 3/5. Functionally, converts N-acetylmannosamine-6-phosphate (ManNAc-6-P) to N-acetylglucosamine-6-phosphate (GlcNAc-6-P). The polypeptide is Putative N-acetylmannosamine-6-phosphate 2-epimerase (Borreliella burgdorferi (strain ZS7) (Borrelia burgdorferi)).